The following is a 490-amino-acid chain: Protein dead ringer homolog (490 aa).

Residues 1-33 (MVEDQRRQLMEEEDEERRLILEEQRRRMMRADR) are compositionally biased toward basic and acidic residues. 2 disordered regions span residues 1 to 77 (MVED…AHID) and 106 to 135 (ITQS…HGGS). Residues 34 to 50 (DEEEEEEEEEEEEEREE) are compositionally biased toward acidic residues. The span at 51 to 76 (DDGRRSEDEMREDEPPGRRETSHAHI) shows a compositional bias: basic and acidic residues. Positions 106–117 (ITQSPPLTNGSN) are enriched in polar residues. An ARID domain is found at 202–294 (DSKRKEFLDD…YLYPYECEKK (93 aa)). Positions 298 to 369 (SPSELQSAID…PPRLSPSTSP (72 aa)) are disordered. Residues 316–325 (PSYHSPHMHP) are compositionally biased toward basic residues. Residues 389–479 (AAMLAELAER…GVLYPRGGTR (91 aa)) form the REKLES domain.

It is found in the nucleus. Transcription factor involved in skeletogenesis and oral ectoderm patterning. In Strongylocentrotus purpuratus (Purple sea urchin), this protein is Protein dead ringer homolog (dri).